Here is a 233-residue protein sequence, read N- to C-terminus: Putative quercetin 2,3-dioxygenase PM1685 (233 aa).

The a divalent metal cation site is built by His-59, His-61, His-103, and Glu-105.

Belongs to the pirin family. The cofactor is a divalent metal cation.

The enzyme catalyses quercetin + O2 = 2-(3,4-dihydroxybenzoyloxy)-4,6-dihydroxybenzoate + CO. It functions in the pathway flavonoid metabolism; quercetin degradation. In terms of biological role, putative quercetin 2,3-dioxygenase. In Pasteurella multocida (strain Pm70), this protein is Putative quercetin 2,3-dioxygenase PM1685.